A 264-amino-acid chain; its full sequence is 3-methyl-2-oxobutanoate hydroxymethyltransferase (264 aa).

Mg(2+) contacts are provided by aspartate 45 and aspartate 84. 3-methyl-2-oxobutanoate-binding positions include 45–46, aspartate 84, and lysine 112; that span reads DS. Residue glutamate 114 participates in Mg(2+) binding. Glutamate 181 acts as the Proton acceptor in catalysis.

This sequence belongs to the PanB family. In terms of assembly, homodecamer; pentamer of dimers. The cofactor is Mg(2+).

The protein localises to the cytoplasm. It carries out the reaction 3-methyl-2-oxobutanoate + (6R)-5,10-methylene-5,6,7,8-tetrahydrofolate + H2O = 2-dehydropantoate + (6S)-5,6,7,8-tetrahydrofolate. Its pathway is cofactor biosynthesis; (R)-pantothenate biosynthesis; (R)-pantoate from 3-methyl-2-oxobutanoate: step 1/2. Functionally, catalyzes the reversible reaction in which hydroxymethyl group from 5,10-methylenetetrahydrofolate is transferred onto alpha-ketoisovalerate to form ketopantoate. In Escherichia coli (strain K12 / MC4100 / BW2952), this protein is 3-methyl-2-oxobutanoate hydroxymethyltransferase.